We begin with the raw amino-acid sequence, 317 residues long: Melanocyte-stimulating hormone receptor (317 aa).

The Extracellular segment spans residues 1–37 (MPIHGAPRKLLGSLNSTPTATPKLGLAANHTGAPCLE). A glycan (N-linked (GlcNAc...) asparagine) is linked at N29. The chain crosses the membrane as a helical span at residues 38–63 (VSIPDGLFLSLGLVSLVENVLVVAAI). Topologically, residues 64 to 72 (AKNRNLHSP) are cytoplasmic. The helical transmembrane segment at 73 to 93 (MYCFICCLALSDLLVSGSNML) threads the bilayer. Residues 94–118 (EMAVVLLLEGGALATRASVVQQLHN) are Extracellular-facing. Residues 119 to 140 (TIDVLTCSSMLCSLCFLGAIAV) traverse the membrane as a helical segment. The Cytoplasmic segment spans residues 141–163 (DRHISIFYALRYHSIMTLPRAQR). A helical transmembrane segment spans residues 164-183 (VIAAIWVASILSSTLFITYY). The Extracellular segment spans residues 184-191 (DHAAVLLC). The helical transmembrane segment at 192–211 (LVVFFLAMLVLMAVLYVHML) threads the bilayer. Residues 212-240 (ARACQHAQGITRLHKRQPPAHQGFGLRGA) lie on the Cytoplasmic side of the membrane. A helical transmembrane segment spans residues 241–266 (ATLTILLGIFFLCWGPFFLHLKLVVF). Topologically, residues 267 to 279 (CPQHLTCSCIFKN) are extracellular. Residues 280–300 (FKVFLTLIICNTIIDPLIYAF) traverse the membrane as a helical segment. Topologically, residues 301-317 (RSQELRRTLKEVLLCSW) are cytoplasmic. C315 is lipidated: S-palmitoyl cysteine.

Belongs to the G-protein coupled receptor 1 family. As to quaternary structure, interacts with MGRN1, but does not undergo MGRN1-mediated ubiquitination; this interaction competes with GNAS-binding and thus inhibits agonist-induced cAMP production. Interacts with OPN3; the interaction results in a decrease in MC1R-mediated cAMP signaling and ultimately a decrease in melanin production in melanocytes.

It is found in the cell membrane. Receptor for MSH (alpha, beta and gamma) and ACTH. The activity of this receptor is mediated by G proteins which activate adenylate cyclase. Mediates melanogenesis, the production of eumelanin (black/brown) and phaeomelanin (red/yellow), via regulation of cAMP signaling in melanocytes. This chain is Melanocyte-stimulating hormone receptor (MC1R), found in Saimiri oerstedii (Central American squirrel monkey).